Reading from the N-terminus, the 313-residue chain is Proline-rich protein 3 (313 aa).

Residues 1-22 (MAITRSSLAICLILSLVTITTA) form the signal peptide. The segment at 27-312 (PSSPPVYKSP…GPKAAPATPK (286 aa)) is 35 X 5 AA approximate repeats. Tandem repeats lie at residues 30–34 (PPVYK), 35–39 (SPEHK), 40–43 (PTLP), 44–48 (SPVYT), 49–53 (PPVYK), 54–57 (PTLS), 58–62 (PPVYT), 64–67 (PTIP), 68–72 (PPVYT), 73–77 (PPVYK), 82–86 (PPVYT), 87–91 (KPTIP), 92–96 (PPVYT), 97–101 (PPVYK), 102–105 (PTLS), 106–110 (PPVYT), 111–115 (KPTIP), 116–120 (PPVYT), 121–125 (PPVYK), 126–131 (PTPVYT), 132–136 (KPTIP), 137–141 (PPVYT), 142–146 (PPVYK), 147–150 (PTPS), 151–155 (PPVYK), 157–163 (SPSYSSP), 164–168 (PPPYV), 169–174 (PKPTYT), 175–181 (PTTKPYV), 182–186 (PEILK), 187–229 (AVDG…VIYS), 258–262 (SPVET), 266–270 (PTNVN), 298–302 (PFYYT), and 308–312 (PATPK).

The protein belongs to the plant proline-rich protein superfamily. ENOD12 family. Exclusively expressed in roots, particularly in root hairs-containing regions, and especially in root hairs.

It localises to the secreted. Its subcellular location is the cell wall. In terms of biological role, may contribute to cell wall structure in root hairs. This Arabidopsis thaliana (Mouse-ear cress) protein is Proline-rich protein 3 (PRP3).